The following is a 170-amino-acid chain: Nicotinamide-nucleotide adenylyltransferase (170 aa).

This sequence belongs to the archaeal NMN adenylyltransferase family.

The protein resides in the cytoplasm. It catalyses the reaction beta-nicotinamide D-ribonucleotide + ATP + H(+) = diphosphate + NAD(+). Its pathway is cofactor biosynthesis; NAD(+) biosynthesis; NAD(+) from nicotinamide D-ribonucleotide: step 1/1. The chain is Nicotinamide-nucleotide adenylyltransferase from Methanothrix thermoacetophila (strain DSM 6194 / JCM 14653 / NBRC 101360 / PT) (Methanosaeta thermophila).